The chain runs to 32 residues: Acetolactate synthase, catabolic (32 aa).

Belongs to the TPP enzyme family. Homodimer.

It catalyses the reaction 2 pyruvate + H(+) = (2S)-2-acetolactate + CO2. Its pathway is polyol metabolism; (R,R)-butane-2,3-diol biosynthesis; (R,R)-butane-2,3-diol from pyruvate: step 1/3. In Klebsiella aerogenes (Enterobacter aerogenes), this protein is Acetolactate synthase, catabolic (budB).